A 510-amino-acid chain; its full sequence is Cytochrome P450 monooxygenase macH (510 aa).

Residues 7 to 29 (LPVSLWLIAAGTFAVYHAIRAVY) form a helical membrane-spanning segment. C454 contacts heme.

Belongs to the cytochrome P450 family. Heme is required as a cofactor.

It localises to the membrane. Its pathway is secondary metabolite biosynthesis; terpenoid biosynthesis. Functionally, cytochrome P450 monooxygenase; part of the gene cluster that mediates the biosynthesis of macrophorins, isoprenoid epoxycyclohexenones containing cyclized drimane moieties. The first step of the pathway is the synthesis of 6-methylsalicylic acid (6-MSA) by the polyketide synthase macA. 6-MSA is then converted to m-cresol by the decarboxylase macB. The cytochrome P450 monooxygenase macC then catalyzes the oxidation of m-cresol to toluquinol. Epoxidation of toluquinol is then performed by the short chain dehydrogenase macD, with the help of macE, and a further prenylation by macG leads to 7-deacetoxyyanuthone A. The next step is the hydroxylation of C-22 of 7-deacetoxyyanuthone A by the cytochrome P450 monooxygenase macH to yield 22-deacetylyanuthone A. O-Mevalon transferase macI then attaches mevalon to the hydroxyl group of 22-deacetylyanuthone A to produce yanuthone E. The terpene cyclase macJ catalyzes the cyclization of 22-deacetylyanuthone A to macrophorin A. MacJ is also able to catalyze cyclization of yanuthone E and 7-deacetoxyyanuthone A to their corresponding macrophorins. The macJ products can be further modified by macH and macJ, as well as by the FAD-dependent monooxygenase macF, to produce additional macrophorins, including 4'-oxomacrophorin A, 4'-oxomacrophorin D and 4'-oxomacrophorin E. In Penicillium terrestre, this protein is Cytochrome P450 monooxygenase macH.